We begin with the raw amino-acid sequence, 83 residues long: uncharacterized protein (83 aa).

A disordered region spans residues 40-65 (RMQAGASPDEDNDVNGETSFSRSFGG). The span at 54–65 (NGETSFSRSFGG) shows a compositional bias: polar residues.

This is an uncharacterized protein from Dictyostelium discoideum (Social amoeba).